The chain runs to 186 residues: Protein SPMIP2 (186 aa).

The interval 163-186 (SSLPRASKPPKLPKLPKKEKKRKH) is disordered. The span at 176-186 (KLPKKEKKRKH) shows a compositional bias: basic residues.

This Homo sapiens (Human) protein is Protein SPMIP2.